The following is a 656-amino-acid chain: DNA ligase (656 aa).

NAD(+) contacts are provided by residues aspartate 32–aspartate 36, serine 81–methionine 82, and glutamate 112. Lysine 114 acts as the N6-AMP-lysine intermediate in catalysis. The NAD(+) site is built by arginine 135, glutamate 169, lysine 284, and lysine 308. 4 residues coordinate Zn(2+): cysteine 402, cysteine 405, cysteine 418, and cysteine 423. The BRCT domain maps to valine 577–lysine 656.

It belongs to the NAD-dependent DNA ligase family. LigA subfamily. Requires Mg(2+) as cofactor. It depends on Mn(2+) as a cofactor.

The enzyme catalyses NAD(+) + (deoxyribonucleotide)n-3'-hydroxyl + 5'-phospho-(deoxyribonucleotide)m = (deoxyribonucleotide)n+m + AMP + beta-nicotinamide D-nucleotide.. Functionally, DNA ligase that catalyzes the formation of phosphodiester linkages between 5'-phosphoryl and 3'-hydroxyl groups in double-stranded DNA using NAD as a coenzyme and as the energy source for the reaction. It is essential for DNA replication and repair of damaged DNA. The protein is DNA ligase of Nautilia profundicola (strain ATCC BAA-1463 / DSM 18972 / AmH).